A 263-amino-acid polypeptide reads, in one-letter code: Imidazole glycerol phosphate synthase subunit HisF (263 aa).

Residues Asp11 and Asp131 contribute to the active site.

This sequence belongs to the HisA/HisF family. In terms of assembly, heterodimer of HisH and HisF.

It localises to the cytoplasm. It carries out the reaction 5-[(5-phospho-1-deoxy-D-ribulos-1-ylimino)methylamino]-1-(5-phospho-beta-D-ribosyl)imidazole-4-carboxamide + L-glutamine = D-erythro-1-(imidazol-4-yl)glycerol 3-phosphate + 5-amino-1-(5-phospho-beta-D-ribosyl)imidazole-4-carboxamide + L-glutamate + H(+). It participates in amino-acid biosynthesis; L-histidine biosynthesis; L-histidine from 5-phospho-alpha-D-ribose 1-diphosphate: step 5/9. IGPS catalyzes the conversion of PRFAR and glutamine to IGP, AICAR and glutamate. The HisF subunit catalyzes the cyclization activity that produces IGP and AICAR from PRFAR using the ammonia provided by the HisH subunit. This Deinococcus geothermalis (strain DSM 11300 / CIP 105573 / AG-3a) protein is Imidazole glycerol phosphate synthase subunit HisF.